Here is an 835-residue protein sequence, read N- to C-terminus: Protein translocase subunit SecA (835 aa).

Residues glutamine 85, 103-107 (GEGKT), and aspartate 492 contribute to the ATP site. Positions 788 to 807 (VQGEAVHPSSDGEEAKKKPV) are disordered. Cysteine 819, cysteine 821, cysteine 830, and cysteine 831 together coordinate Zn(2+).

Belongs to the SecA family. In terms of assembly, monomer and homodimer. Part of the essential Sec protein translocation apparatus which comprises SecA, SecYEG and auxiliary proteins SecDF. Other proteins may also be involved. It depends on Zn(2+) as a cofactor.

The protein resides in the cell membrane. Its subcellular location is the cytoplasm. It catalyses the reaction ATP + H2O + cellular proteinSide 1 = ADP + phosphate + cellular proteinSide 2.. In terms of biological role, part of the Sec protein translocase complex. Interacts with the SecYEG preprotein conducting channel. Has a central role in coupling the hydrolysis of ATP to the transfer of proteins into and across the cell membrane, serving as an ATP-driven molecular motor driving the stepwise translocation of polypeptide chains across the membrane. This Bacillus cereus (strain ATCC 14579 / DSM 31 / CCUG 7414 / JCM 2152 / NBRC 15305 / NCIMB 9373 / NCTC 2599 / NRRL B-3711) protein is Protein translocase subunit SecA.